Consider the following 157-residue polypeptide: ATP synthase subunit b (157 aa).

A helical transmembrane segment spans residues 11 to 31; sequence LIMFAMFTWFCMKFIWPPIVM.

This sequence belongs to the ATPase B chain family. In terms of assembly, F-type ATPases have 2 components, F(1) - the catalytic core - and F(0) - the membrane proton channel. F(1) has five subunits: alpha(3), beta(3), gamma(1), delta(1), epsilon(1). F(0) has three main subunits: a(1), b(2) and c(10-14). The alpha and beta chains form an alternating ring which encloses part of the gamma chain. F(1) is attached to F(0) by a central stalk formed by the gamma and epsilon chains, while a peripheral stalk is formed by the delta and b chains.

It is found in the cell inner membrane. In terms of biological role, f(1)F(0) ATP synthase produces ATP from ADP in the presence of a proton or sodium gradient. F-type ATPases consist of two structural domains, F(1) containing the extramembraneous catalytic core and F(0) containing the membrane proton channel, linked together by a central stalk and a peripheral stalk. During catalysis, ATP synthesis in the catalytic domain of F(1) is coupled via a rotary mechanism of the central stalk subunits to proton translocation. Component of the F(0) channel, it forms part of the peripheral stalk, linking F(1) to F(0). This Vesicomyosocius okutanii subsp. Calyptogena okutanii (strain HA) protein is ATP synthase subunit b.